The sequence spans 146 residues: Hemoglobin subunit delta (146 aa).

Positions 2–146 constitute a Globin domain; sequence HLTGDEKSAV…VATALAHKYH (145 aa). Phosphoserine is present on serine 50. Heme b is bound by residues histidine 63 and histidine 92.

It belongs to the globin family. Heterotetramer of two delta chains and two alpha chains. Red blood cells.

In Saimiri sciureus (Common squirrel monkey), this protein is Hemoglobin subunit delta (HBD).